Here is a 405-residue protein sequence, read N- to C-terminus: MPGIAIVGAQWGDEGKGKIVDFLAPEAEYVVRYQGGANAGHTVNAKGKTFKLNLLPSGVLHEGATSILGDGMVIDPEKFIEERRNLMEGGLNPRLKISDRAHIVLPHHKYVDGRKDFVGTTGKGIGPAYADRARRVGIRFGDLLDEGVLRERIERLLEAKPNSTRDAGWATVEDGLKSLAPIREQLAPFIADTGSELRQAIKDGRKVLFEGAQATLLDLNYGTYPFVTSSHPTVGGILVGTGVNHKALHRVYGVAKAFNTRVGHGPFATEVHDEAGILRLRGDGSQPWDEYGTTTGRPRRVGWLDLELLKYAVDVNGLDGLVINKMDILGGLDEIPVCTGYDEGGQPVFKKMKGWSSTDGVTSRATLPKEAQAYLDLIEDTVQCPVVIFSAGPEREKTYGEVHWG.

GTP-binding positions include 12 to 18 and 40 to 42; these read GDEGKGK and GHT. Asp-13 functions as the Proton acceptor in the catalytic mechanism. The Mg(2+) site is built by Asp-13 and Gly-40. IMP is bound by residues 13–16, 38–41, Thr-121, Arg-135, Gln-213, Thr-228, and Arg-297; these read DEGK and NAGH. His-41 serves as the catalytic Proton donor. Residue 293–299 coordinates substrate; sequence TTTGRPR. GTP is bound by residues Arg-299, 325 to 327, and 390 to 392; these read KMD and SAG.

This sequence belongs to the adenylosuccinate synthetase family. In terms of assembly, homodimer. Requires Mg(2+) as cofactor.

The protein localises to the cytoplasm. It carries out the reaction IMP + L-aspartate + GTP = N(6)-(1,2-dicarboxyethyl)-AMP + GDP + phosphate + 2 H(+). The protein operates within purine metabolism; AMP biosynthesis via de novo pathway; AMP from IMP: step 1/2. Functionally, plays an important role in the de novo pathway of purine nucleotide biosynthesis. Catalyzes the first committed step in the biosynthesis of AMP from IMP. The sequence is that of Adenylosuccinate synthetase from Deinococcus radiodurans (strain ATCC 13939 / DSM 20539 / JCM 16871 / CCUG 27074 / LMG 4051 / NBRC 15346 / NCIMB 9279 / VKM B-1422 / R1).